Reading from the N-terminus, the 150-residue chain is 3-dehydroquinate dehydratase (150 aa).

Tyr-22 serves as the catalytic Proton acceptor. The substrate site is built by Asn-73, His-79, and Asp-86. The active-site Proton donor is the His-99. Substrate contacts are provided by residues 100 to 101 and Arg-110; that span reads LS.

Belongs to the type-II 3-dehydroquinase family. As to quaternary structure, homododecamer.

The catalysed reaction is 3-dehydroquinate = 3-dehydroshikimate + H2O. It participates in metabolic intermediate biosynthesis; chorismate biosynthesis; chorismate from D-erythrose 4-phosphate and phosphoenolpyruvate: step 3/7. Its function is as follows. Catalyzes a trans-dehydration via an enolate intermediate. The polypeptide is 3-dehydroquinate dehydratase (Dinoroseobacter shibae (strain DSM 16493 / NCIMB 14021 / DFL 12)).